A 91-amino-acid chain; its full sequence is UPF0250 protein PSEEN4821 (91 aa).

This sequence belongs to the UPF0250 family.

This chain is UPF0250 protein PSEEN4821, found in Pseudomonas entomophila (strain L48).